The sequence spans 202 residues: Cytochrome c oxidase assembly protein CtaG (202 aa).

Residues 1–13 lie on the Cytoplasmic side of the membrane; sequence MSDKAAAPKKQGR. A helical; Signal-anchor for type II membrane protein membrane pass occupies residues 14–36; sequence NNGAVVLMCLSFVFGMGAMSYAA. Topologically, residues 37–202 are periplasmic; it reads VPLYRIFCQV…GGAEKVEKKL (166 aa). The segment at 183–202 is disordered; that stretch reads EGPKPLASNEGGAEKVEKKL.

The protein belongs to the COX11/CtaG family.

It is found in the cell inner membrane. In terms of biological role, exerts its effect at some terminal stage of cytochrome c oxidase synthesis, probably by being involved in the insertion of the copper B into subunit I. In Rhizobium etli (strain CIAT 652), this protein is Cytochrome c oxidase assembly protein CtaG.